Consider the following 180-residue polypeptide: Hypoxanthine-guanine phosphoribosyltransferase (180 aa).

Lys-43 and Gly-44 together coordinate diphosphate. Positions 99 and 100 each coordinate Mg(2+). Asp-103 (proton acceptor) is an active-site residue. GMP is bound by residues Lys-131, 152 to 153, and Asp-159; that span reads FI. Arg-165 contributes to the diphosphate binding site.

This sequence belongs to the purine/pyrimidine phosphoribosyltransferase family. It depends on Mg(2+) as a cofactor.

It is found in the cytoplasm. It catalyses the reaction IMP + diphosphate = hypoxanthine + 5-phospho-alpha-D-ribose 1-diphosphate. The catalysed reaction is GMP + diphosphate = guanine + 5-phospho-alpha-D-ribose 1-diphosphate. It participates in purine metabolism; IMP biosynthesis via salvage pathway; IMP from hypoxanthine: step 1/1. Its pathway is purine metabolism; GMP biosynthesis via salvage pathway; GMP from guanine: step 1/1. Its function is as follows. Purine salvage pathway enzyme that catalyzes the transfer of the ribosyl-5-phosphate group from 5-phospho-alpha-D-ribose 1-diphosphate (PRPP) to the N9 position of the 6-oxopurines hypoxanthine and guanine to form the corresponding ribonucleotides IMP (inosine 5'-monophosphate) and GMP (guanosine 5'-monophosphate), with the release of PPi. The polypeptide is Hypoxanthine-guanine phosphoribosyltransferase (hpt) (Streptococcus mutans serotype c (strain ATCC 700610 / UA159)).